The sequence spans 788 residues: Bifunctional purine biosynthetic protein ADE1 (788 aa).

Residues 1-429 (MSLRILLVGN…NRKDIAYKAF (429 aa)) are GARS. In terms of domain architecture, ATP-grasp spans 114 to 323 (KDFMKKHNIP…LAEVMLACVE (210 aa)). 140–201 (VKKVGHRVVI…EEFLEGDELS (62 aa)) is a binding site for ATP. Residues E291 and N293 each coordinate Mg(2+). Residues 439-752 (ITYAQAGVSI…VVKQEKVAEV (314 aa)) are AIRS.

In the N-terminal section; belongs to the GARS family. It in the C-terminal section; belongs to the AIR synthase family. The cofactor is Mg(2+). It depends on Mn(2+) as a cofactor.

It is found in the cytoplasm. The protein resides in the cytosol. It catalyses the reaction 5-phospho-beta-D-ribosylamine + glycine + ATP = N(1)-(5-phospho-beta-D-ribosyl)glycinamide + ADP + phosphate + H(+). It carries out the reaction 2-formamido-N(1)-(5-O-phospho-beta-D-ribosyl)acetamidine + ATP = 5-amino-1-(5-phospho-beta-D-ribosyl)imidazole + ADP + phosphate + H(+). The protein operates within purine metabolism; IMP biosynthesis via de novo pathway; 5-amino-1-(5-phospho-D-ribosyl)imidazole from N(2)-formyl-N(1)-(5-phospho-D-ribosyl)glycinamide: step 2/2. Its pathway is purine metabolism; IMP biosynthesis via de novo pathway; N(1)-(5-phospho-D-ribosyl)glycinamide from 5-phospho-alpha-D-ribose 1-diphosphate: step 2/2. In terms of biological role, catalyzes the second and fifth step in the 'de novo' purine biosynthesis pathway; contains phosphoribosylamine--glycine ligase (GARS) and phosphoribosylformylglycinamidine cyclo-ligase (AIRS) activities. The protein is Bifunctional purine biosynthetic protein ADE1 of Yarrowia lipolytica (strain CLIB 122 / E 150) (Yeast).